Reading from the N-terminus, the 245-residue chain is Probable histone chaperone asf-1-like protein (245 aa).

The segment covering 157-166 has biased composition (acidic residues); the sequence is EDPVAEPVDE. Positions 157–245 are disordered; it reads EDPVAEPVDE…SGDVEMGDKH (89 aa). Basic and acidic residues predominate over residues 167 to 183; the sequence is EANKVFDEDDLMPLHDD. Residues 184-206 are compositionally biased toward acidic residues; sequence GQDDDEEEEDDDETGPNTEEVDL. Positions 215 to 245 are enriched in basic and acidic residues; it reads ANAHDGTEQKNGEESMEHDGASGDVEMGDKH.

This sequence belongs to the ASF1 family. In terms of assembly, interacts with histone H3 and histone H4.

Its subcellular location is the nucleus. Its function is as follows. Histone chaperone that facilitates histone deposition and histone exchange and removal during nucleosome assembly and disassembly. The sequence is that of Probable histone chaperone asf-1-like protein (asfl-1) from Caenorhabditis elegans.